A 423-amino-acid polypeptide reads, in one-letter code: uncharacterized protein (423 aa).

This sequence belongs to the asfivirus E423R family.

Its subcellular location is the virion. This is an uncharacterized protein from Ornithodoros (relapsing fever ticks).